The chain runs to 473 residues: P3 protein (473 aa).

9 consecutive transmembrane segments (helical) span residues 25 to 45 (FVGM…AQVM), 221 to 241 (PMLL…FLMA), 249 to 269 (ALAL…SYLF), 277 to 297 (VTLA…FLPL), 316 to 336 (ISKI…GVVI), 356 to 376 (FILL…ILVG), 381 to 401 (IVLV…SLAI), 413 to 433 (VSIE…QLSL), and 446 to 466 (FIVA…QFIY).

This sequence belongs to the bile acid:sodium symporter (BASS) (TC 2.A.28) family.

The protein localises to the membrane. The ubiquitous expression and the conservation of the sequence in distant animal species suggest that the gene codes for a protein with housekeeping functions. This Mus musculus (Mouse) protein is P3 protein (Slc10a3).